The sequence spans 284 residues: NADPH-dependent 7-cyano-7-deazaguanine reductase (284 aa).

91–93 (IES) provides a ligand contact to substrate. 93-94 (SK) contacts NADPH. Catalysis depends on Cys192, which acts as the Thioimide intermediate. Asp199 acts as the Proton donor in catalysis. Residue 231 to 232 (HE) participates in substrate binding. Position 260–261 (260–261 (RG)) interacts with NADPH.

This sequence belongs to the GTP cyclohydrolase I family. QueF type 2 subfamily. In terms of assembly, homodimer.

It is found in the cytoplasm. The enzyme catalyses 7-aminomethyl-7-carbaguanine + 2 NADP(+) = 7-cyano-7-deazaguanine + 2 NADPH + 3 H(+). Its pathway is tRNA modification; tRNA-queuosine biosynthesis. Functionally, catalyzes the NADPH-dependent reduction of 7-cyano-7-deazaguanine (preQ0) to 7-aminomethyl-7-deazaguanine (preQ1). The sequence is that of NADPH-dependent 7-cyano-7-deazaguanine reductase from Shewanella denitrificans (strain OS217 / ATCC BAA-1090 / DSM 15013).